We begin with the raw amino-acid sequence, 114 residues long: UPF0145 protein Acry_1752 (114 aa).

This sequence belongs to the UPF0145 family.

The sequence is that of UPF0145 protein Acry_1752 from Acidiphilium cryptum (strain JF-5).